Here is a 387-residue protein sequence, read N- to C-terminus: Alkanesulfonate monooxygenase (387 aa).

It belongs to the SsuD family.

The enzyme catalyses an alkanesulfonate + FMNH2 + O2 = an aldehyde + FMN + sulfite + H2O + 2 H(+). Its function is as follows. Catalyzes the desulfonation of aliphatic sulfonates. The chain is Alkanesulfonate monooxygenase from Cupriavidus necator (strain ATCC 17699 / DSM 428 / KCTC 22496 / NCIMB 10442 / H16 / Stanier 337) (Ralstonia eutropha).